Here is a 299-residue protein sequence, read N- to C-terminus: Very long chain fatty acid elongase 5 (299 aa).

Methionine 1 is subject to N-acetylmethionine. A run of 7 helical transmembrane segments spans residues 26–46 (WFLL…LLIV), 64–84 (ILVV…CELV), 112–132 (VLWW…FFIL), 139–158 (ITVL…WFVM), 168–187 (FGAT…YGLS), 205–225 (GQLL…IWPC), and 226–246 (TFPL…ITLF). A Phosphoserine modification is found at serine 285.

Belongs to the ELO family. ELOVL5 subfamily. In terms of assembly, interacts with TECR.

It localises to the endoplasmic reticulum membrane. Its subcellular location is the cell projection. The protein localises to the dendrite. The catalysed reaction is a very-long-chain acyl-CoA + malonyl-CoA + H(+) = a very-long-chain 3-oxoacyl-CoA + CO2 + CoA. It carries out the reaction (6Z,9Z,12Z)-octadecatrienoyl-CoA + malonyl-CoA + H(+) = (8Z,11Z,14Z)-3-oxoeicosatrienoyl-CoA + CO2 + CoA. The enzyme catalyses (9Z,12Z,15Z)-octadecatrienoyl-CoA + malonyl-CoA + H(+) = (11Z,14Z,17Z)-3-oxoeicosatrienoyl-CoA + CO2 + CoA. It catalyses the reaction (9Z)-hexadecenoyl-CoA + malonyl-CoA + H(+) = 3-oxo-(11Z)-octadecenoyl-CoA + CO2 + CoA. The catalysed reaction is (9Z)-octadecenoyl-CoA + malonyl-CoA + H(+) = 3-oxo-(11Z)-eicosenoyl-CoA + CO2 + CoA. It carries out the reaction (11Z)-octadecenoyl-CoA + malonyl-CoA + H(+) = 3-oxo-(13Z)-eicosenoyl-CoA + CO2 + CoA. The enzyme catalyses (9Z,12Z)-octadecadienoyl-CoA + malonyl-CoA + H(+) = (11Z,14Z)-3-oxoicosa-11,14-dienoyl-CoA + CO2 + CoA. It catalyses the reaction (6Z,9Z,12Z,15Z)-octadecatetraenoyl-CoA + malonyl-CoA + H(+) = (8Z,11Z,14Z,17Z)-3-oxoicosatetraenoyl-CoA + CO2 + CoA. The catalysed reaction is (5Z,8Z,11Z,14Z)-eicosatetraenoyl-CoA + malonyl-CoA + H(+) = (7Z,10Z,13Z,16Z)-3-oxodocosatetraenoyl-CoA + CO2 + CoA. It carries out the reaction (5Z,8Z,11Z,14Z,17Z)-eicosapentaenoyl-CoA + malonyl-CoA + H(+) = 3-oxo-(7Z,10Z,13Z,16Z,19Z)-docosapentaenoyl-CoA + CO2 + CoA. It functions in the pathway lipid metabolism; polyunsaturated fatty acid biosynthesis. In terms of biological role, catalyzes the first and rate-limiting reaction of the four reactions that constitute the long-chain fatty acids elongation cycle. This endoplasmic reticulum-bound enzymatic process allows the addition of 2 carbons to the chain of long- and very long-chain fatty acids (VLCFAs) per cycle. Condensing enzyme that acts specifically toward polyunsaturated acyl-CoA with the higher activity toward C18:3(n-6) acyl-CoA. May participate in the production of monounsaturated and of polyunsaturated VLCFAs of different chain lengths that are involved in multiple biological processes as precursors of membrane lipids and lipid mediators. In conditions where the essential linoleic and alpha linoleic fatty acids are lacking it is also involved in the synthesis of Mead acid from oleic acid. The sequence is that of Very long chain fatty acid elongase 5 from Bos taurus (Bovine).